Here is a 251-residue protein sequence, read N- to C-terminus: Pyridoxine 5'-phosphate synthase (251 aa).

3-amino-2-oxopropyl phosphate is bound by residues N8 and R19. H44 (proton acceptor) is an active-site residue. R46 and H51 together coordinate 1-deoxy-D-xylulose 5-phosphate. The active-site Proton acceptor is the E76. T106 is a 1-deoxy-D-xylulose 5-phosphate binding site. H200 serves as the catalytic Proton donor. 3-amino-2-oxopropyl phosphate-binding positions include D201 and 223–224 (GH).

The protein belongs to the PNP synthase family. In terms of assembly, homooctamer; tetramer of dimers.

The protein resides in the cytoplasm. The enzyme catalyses 3-amino-2-oxopropyl phosphate + 1-deoxy-D-xylulose 5-phosphate = pyridoxine 5'-phosphate + phosphate + 2 H2O + H(+). It functions in the pathway cofactor biosynthesis; pyridoxine 5'-phosphate biosynthesis; pyridoxine 5'-phosphate from D-erythrose 4-phosphate: step 5/5. In terms of biological role, catalyzes the complicated ring closure reaction between the two acyclic compounds 1-deoxy-D-xylulose-5-phosphate (DXP) and 3-amino-2-oxopropyl phosphate (1-amino-acetone-3-phosphate or AAP) to form pyridoxine 5'-phosphate (PNP) and inorganic phosphate. This is Pyridoxine 5'-phosphate synthase from Agrobacterium fabrum (strain C58 / ATCC 33970) (Agrobacterium tumefaciens (strain C58)).